A 392-amino-acid chain; its full sequence is tRNA (guanine(6)-N2)-methyltransferase (392 aa).

The region spanning 73–183 (SAIPLLNHFS…DSELFVGVDT (111 aa)) is the THUMP domain. Residues 199 to 203 (HPAHL), 230 to 232 (SGT), E275, 303 to 304 (DA), and N317 contribute to the S-adenosyl-L-methionine site.

This sequence belongs to the methyltransferase superfamily.

Its subcellular location is the cytoplasm. The enzyme catalyses guanosine(6) in tRNA + S-adenosyl-L-methionine = N(2)-methylguanosine(6) in tRNA + S-adenosyl-L-homocysteine + H(+). In terms of biological role, S-adenosyl-L-methionine-dependent methyltransferase that catalyzes the methylation of the guanosine nucleotide at position 6 (m2G6) in tRNA. The polypeptide is tRNA (guanine(6)-N2)-methyltransferase (Archaeoglobus fulgidus (strain ATCC 49558 / DSM 4304 / JCM 9628 / NBRC 100126 / VC-16)).